The sequence spans 756 residues: Protease KEX1 (756 aa).

An N-terminal signal peptide occupies residues M1 to P24. Residues N121, N144, and N152 are each glycosylated (N-linked (GlcNAc...) asparagine). The Peptidase S8 domain maps to Q130 to V440. Catalysis depends on charge relay system residues D164 and H202. 2 cysteine pairs are disulfide-bonded: C218–C365 and C310–C340. The active-site Charge relay system is the S373. N-linked (GlcNAc...) asparagine glycans are attached at residues N392 and N538. Residues V449–D583 enclose the P/Homo B domain. The segment at A599–L632 is disordered. Residues S606–G628 are compositionally biased toward low complexity. Residues L641–L661 form a helical membrane-spanning segment. Residues E715 to K756 form a disordered region. Residues R721–K756 show a composition bias toward polar residues.

It belongs to the peptidase S8 family. Furin subfamily. Requires Ca(2+) as cofactor.

The protein localises to the membrane. Its function is as follows. Probably involved in the processing of the precursor of m1-toxin and alpha-factor. The sequence is that of Protease KEX1 (KEX1) from Kluyveromyces lactis (strain ATCC 8585 / CBS 2359 / DSM 70799 / NBRC 1267 / NRRL Y-1140 / WM37) (Yeast).